Here is a 1027-residue protein sequence, read N- to C-terminus: Fibril-forming collagen alpha chain (1027 aa).

Residues 1 to 12 (YRAGPRYIQAQV) are nonhelical region (N-terminal). The disordered stretch occupies residues 1–1027 (YRAGPRYIQA…GPPGNSDYGA (1027 aa)). The interval 13–1023 (GPIGPRGPPG…PGPPGPPGNS (1011 aa)) is triple-helical region. Over residues 17–26 (PRGPPGPPGS) the composition is skewed to pro residues. A 4-hydroxyproline; partial mark is found at P21 and P24. A 4-hydroxyproline mark is found at P27 and P39. At P53 the chain carries 3-hydroxyproline; partial. P54 is subject to 4-hydroxyproline. Basic and acidic residues predominate over residues 63 to 72 (SGDDGRDGEP). Position 72 is a 4-hydroxyproline; partial (P72). Residues 73-91 (GPRGGIGPMGPRGAGGMPG) show a composition bias toward gly residues. 2 positions are modified to 4-hydroxyproline: P90 and P93. A 5-hydroxylysine mark is found at K96 and K108. O-linked (Gal...) hydroxylysine glycans are attached at residues K96 and K108. P123 and P128 each carry 4-hydroxyproline; partial. P150 bears the 4-hydroxyproline mark. At P161 the chain carries 3-hydroxyproline; partial. P162 carries the post-translational modification 4-hydroxyproline. Position 164 is a 3-hydroxyproline; partial (P164). 4-hydroxyproline occurs at positions 165, 174, 177, and 180. Over residues 168–182 (IGSTGSPGFPGTPGS) the composition is skewed to low complexity. 5-hydroxylysine occurs at positions 183 and 192. O-linked (Gal...) hydroxylysine glycosylation occurs at K192. 4-hydroxyproline is present on residues P207, P216, P219, P228, and P237. The segment covering 227-249 (EPGASGESGLPGPSGFPGPRGMP) has biased composition (low complexity). 4-hydroxyproline; partial is present on P243. 4-hydroxyproline occurs at positions 249 and 255. A compositionally biased stretch (gly residues) spans 259–268 (GAKGDGGPTG). K261 is modified (5-hydroxylysine). Residue K261 is glycosylated (O-linked (Gal...) hydroxylysine). 4-hydroxyproline; partial occurs at positions 273 and 276. K279 carries the post-translational modification 5-hydroxylysine. Residue K279 is glycosylated (O-linked (Gal...) hydroxylysine). P285, P291, and P303 each carry 4-hydroxyproline; partial. 4-hydroxyproline is present on residues P306, P312, P321, P327, and P339. Position 342 is a 5-hydroxylysine (K342). Position 348 is a 4-hydroxyproline; partial (P348). K351 is modified (5-hydroxylysine; partial). P366, P372, and P375 each carry 4-hydroxyproline. A compositionally biased stretch (basic and acidic residues) spans 380-396 (RPGKDGRPGIRGKDGKQ). P381 bears the 4-hydroxyproline; partial mark. P387 bears the 4-hydroxyproline mark. A compositionally biased stretch (low complexity) spans 398 to 420 (EQGPQGPQGLAGLQGRAGPPGAR). P416 bears the 3-hydroxyproline; partial mark. 4-hydroxyproline occurs at positions 417, 423, 429, and 432. The segment covering 437-446 (EQGDAGKDGE) has biased composition (basic and acidic residues). Positions 447-480 (TGAAGPPGAAGPTGARGPPGPRGQQGFQGLAGAQ) are enriched in low complexity. 4-hydroxyproline is present on residues P453, P465, and P483. A 4-hydroxyproline; partial mark is found at P500, P503, and P506. Residues 502–511 (GPAGPGGERG) show a composition bias toward gly residues. 4-hydroxyproline occurs at positions 513 and 525. The segment covering 527 to 543 (ERGATGPAGPTGSPGVA) has biased composition (low complexity). 4-hydroxyproline; partial is present on residues P533 and P536. Residue P540 is modified to 4-hydroxyproline. Position 546 is a 5-hydroxylysine (K546). P551 is subject to 3-hydroxyproline; partial. Residues P552 and P561 each carry the 4-hydroxyproline modification. 5-hydroxylysine occurs at positions 567 and 573. O-linked (Gal...) hydroxylysine glycosylation occurs at K573. Basic and acidic residues predominate over residues 575–599 (SRGDIGPRGKAGERGKDGERGERGE). P603 carries the post-translational modification 4-hydroxyproline. At K612 the chain carries 5-hydroxylysine. O-linked (Gal...) hydroxylysine glycosylation occurs at K612. P621 is modified (4-hydroxyproline; partial). P627 carries the 4-hydroxyproline modification. Residues 635–644 (PAGSQGIQGQ) are compositionally biased toward low complexity. Position 645 is a 4-hydroxyproline; partial (P645). The residue at position 647 (P647) is a 3-hydroxyproline; partial. Position 648 is a 4-hydroxyproline (P648). Residue K657 is modified to 5-hydroxylysine. O-linked (Gal...) hydroxylysine glycosylation occurs at K657. 6 positions are modified to 4-hydroxyproline: P663, P708, P711, P714, P717, and P723. A compositionally biased stretch (low complexity) spans 698–710 (ETGAQGEIGLPGS). Over residues 714–726 (PGLPGPSGQPGPS) the composition is skewed to pro residues. K738 bears the 5-hydroxylysine mark. The O-linked (Gal...) hydroxylysine glycan is linked to K738. 4-hydroxyproline is present on residues P744 and P759. Residues 750-771 (QGDRGSDGEPGRDGTKGERGED) show a composition bias toward basic and acidic residues. K765 is modified (5-hydroxylysine). K765 is a glycosylation site (O-linked (Gal...) hydroxylysine). The residue at position 773 (P773) is a 3-hydroxyproline; partial. 4-hydroxyproline occurs at positions 774, 783, and 792. The span at 802–814 (GPMGGQGMKGDGG) shows a compositional bias: gly residues. Residue K810 is modified to 5-hydroxylysine. K810 carries O-linked (Gal...) hydroxylysine glycosylation. The residue at position 815 (P815) is a 3-hydroxyproline; partial. 4-hydroxyproline is present on residues P816, P843, P849, P855, P861, P867, P888, P894, P903, and P915. Over residues 828–848 (AGPQGPTGPSGQAGAPGQEGA) the composition is skewed to low complexity. Over residues 884 to 894 (QRGLPGAAGPP) the composition is skewed to low complexity. Low complexity predominate over residues 911–927 (PVGAPGSQGPAGIMGMK). K927 is subject to 5-hydroxylysine. K927 carries O-linked (Gal...) hydroxylysine glycosylation. K933 carries the post-translational modification 5-hydroxylysine; partial. A 5-hydroxylysine mark is found at K936 and K939. A glycan (O-linked (Gal...) hydroxylysine) is linked at K936. A compositionally biased stretch (low complexity) spans 942-962 (TGLPGLQGLQGTPGHSGESGP). 4-hydroxyproline is present on P945. P954 bears the 4-hydroxyproline; partial mark. Residues P963 and P966 each carry the 4-hydroxyproline modification. Residues 973-982 (GEAGGRGSQG) are compositionally biased toward gly residues. Positions 983–1001 (PPGKDGQPGPSGRVGPRGP) are enriched in low complexity. P984 and P990 each carry 4-hydroxyproline. A 3-hydroxyproline; partial modification is found at P1010. Positions 1010 to 1020 (PPGPPGPPGPP) are enriched in pro residues. P1011 carries the 4-hydroxyproline modification. P1013 carries the 3-hydroxyproline; partial modification. Residue P1014 is modified to 4-hydroxyproline. P1016 is modified (3-hydroxyproline; partial). A 4-hydroxyproline modification is found at P1017. P1019 carries the post-translational modification 3-hydroxyproline; partial. P1020 carries the post-translational modification 4-hydroxyproline. Positions 1024 to 1027 (DYGA) are nonhelical region (C-terminal).

Homotetramer.

It localises to the secreted. The protein localises to the extracellular space. The protein resides in the extracellular matrix. Fibril-forming collagen. This chain is Fibril-forming collagen alpha chain, found in Riftia pachyptila (Vent tube worm).